The following is a 179-amino-acid chain: Fucolectin-4 (179 aa).

A signal peptide spans 1-23; the sequence is MEVKTIMLLFQILAISTLKQGSA. The tract at residues 31-179 is F5/8 type C-like; it reads EENVALRGRA…VEVNALLPVN (149 aa). Positions 58, 61, 63, and 72 each coordinate Ca(2+). 3 disulfide bridges follow: cysteine 73–cysteine 168, cysteine 104–cysteine 105, and cysteine 130–cysteine 146. Histidine 75 and arginine 101 together coordinate alpha-L-fucose. A Cell attachment site motif is present at residues 101-103; the sequence is RGD. Residue arginine 108 participates in alpha-L-fucose binding. The Ca(2+) site is built by cysteine 168 and glutamate 169.

It belongs to the fucolectin family. Homotrimer. As to expression, gill mucous cells.

Its subcellular location is the secreted. Functionally, acts as a defensive agent. Recognizes blood group fucosylated oligosaccharides including A, B, H and Lewis B-type antigens. Does not recognize Lewis A antigen and has low affinity for monovalent haptens. The polypeptide is Fucolectin-4 (Anguilla japonica (Japanese eel)).